A 492-amino-acid chain; its full sequence is MCTEAEQPSPPAQQQEQGNPPLCKAQNPKPARLYRLVLLFVAGSLAAWTFHALSSTNLVWKLRQLHHLPTAHYLQTRDEFALYSVEELNAFKEFYDKSVSDSVGASYTEAEQTNIKEALGALRMAQDLYLAGKDDKAARLFEHALALAPRHPEVLLRYGEFLEHNQRNIVLADQYYFQALTISPSNSEALANRQRTADVVQSLDERRLESLDSKRDALSAIHESNGALRRAKKEAYFQHIYHSVGIEGNTMTLAQTRSILETRMAVDGKSIDEHNEILGMDLAMKYINASLVQKIDITIKDILELHRRVLGHVDPIEGGEFRRNQVYVGGHIPPGPGDLALLMQRFERWLNSEHSSTLHPVNYAALAHYKLVHIHPFVDGNGRTSRLLMNTLLMRAGYPPVIIPKQQRSKYYHFLKLANEGDIRPFVRFIADCTEKTLDLYLWATSDLPQQIPMLIQTESEAGERLAQMQSPNVAQRSSILEFYESGSGDIP.

Over residues 1–17 (MCTEAEQPSPPAQQQEQ) the composition is skewed to low complexity. Residues 1–25 (MCTEAEQPSPPAQQQEQGNPPLCKA) form a disordered region. Residues 33-55 (LYRLVLLFVAGSLAAWTFHALSS) form a helical membrane-spanning segment. 2 TPR repeats span residues 118-151 (ALGALRMAQDLYLAGKDDKAARLFEHALALAPRH) and 152-186 (PEVLLRYGEFLEHNQRNIVLADQYYFQALTISPSN). An Inhibitory (S/T)XXXE(G/N) motif motif is present at residues 243 to 248 (SVGIEG). Residues Glu247 and 328–331 (VGGH) each bind ATP. The 136-residue stretch at 297–432 (ITIKDILELH…IRPFVRFIAD (136 aa)) folds into the Fido domain. His375 is an active-site residue. Residues 379–386 (DGNGRTSR), 411–412 (YY), and Asn419 each bind ATP.

This sequence belongs to the fic family. Homodimer.

It is found in the membrane. The enzyme catalyses L-tyrosyl-[protein] + ATP = O-(5'-adenylyl)-L-tyrosyl-[protein] + diphosphate. It catalyses the reaction L-threonyl-[protein] + ATP = 3-O-(5'-adenylyl)-L-threonyl-[protein] + diphosphate. The catalysed reaction is 3-O-(5'-adenylyl)-L-threonyl-[protein] + H2O = L-threonyl-[protein] + AMP + H(+). Its activity is regulated as follows. The side chain of Glu-247 determines which of the two opposing activities (AMPylase or de-AMPylase) will take place. In response to endoplasmic reticulum stress, mediates de-AMPylase activity. Adenylyltransferase activity is inhibited by the inhibitory helix present at the N-terminus: Glu-247 binds ATP and competes with ATP-binding at Arg-386, thereby preventing adenylyltransferase activity. In unstressed cells, disengagement of Glu-247 promotes adenylyltransferase activity. Activation dissociates ATP-binding from Glu-247, allowing ordered binding of the entire ATP moiety with the alpha-phosphate in an orientation that is productive for accepting an incoming target hydroxyl side chain. Protein that can both mediate the addition of adenosine 5'-monophosphate (AMP) to specific residues of target proteins (AMPylation), and the removal of the same modification from target proteins (de-AMPylation), depending on the context. The side chain of Glu-247 determines which of the two opposing activities (AMPylase or de-AMPylase) will take place. Acts as a key regulator of the unfolded protein response (UPR) by mediating AMPylation or de-AMPylation of Hsc70-3/BiP. In unstressed cells, acts as an adenylyltransferase by mediating AMPylation of Hsc70-3/BiP at 'Thr-518', thereby inactivating it. In response to endoplasmic reticulum stress, acts as a phosphodiesterase by mediating removal of ATP (de-AMPylation) from Hsc70-3/BiP at 'Thr-518', leading to restore HSPA5/BiP activity. This Drosophila sechellia (Fruit fly) protein is Protein adenylyltransferase Fic.